Reading from the N-terminus, the 120-residue chain is Glycine cleavage system H protein (120 aa).

One can recognise a Lipoyl-binding domain in the interval 17–99 (VATVGITAHA…MGAGWFFKLK (83 aa)). The residue at position 58 (Lys58) is an N6-lipoyllysine.

Belongs to the GcvH family. As to quaternary structure, the glycine cleavage system is composed of four proteins: P, T, L and H. The cofactor is (R)-lipoate.

In terms of biological role, the glycine cleavage system catalyzes the degradation of glycine. The H protein shuttles the methylamine group of glycine from the P protein to the T protein. This chain is Glycine cleavage system H protein, found in Rhizobium rhizogenes (strain K84 / ATCC BAA-868) (Agrobacterium radiobacter).